Reading from the N-terminus, the 156-residue chain is Cyanate hydratase (156 aa).

Residues arginine 96, glutamate 99, and serine 122 contribute to the active site.

This sequence belongs to the cyanase family.

It carries out the reaction cyanate + hydrogencarbonate + 3 H(+) = NH4(+) + 2 CO2. Catalyzes the reaction of cyanate with bicarbonate to produce ammonia and carbon dioxide. The protein is Cyanate hydratase of Escherichia coli O7:K1 (strain IAI39 / ExPEC).